The primary structure comprises 171 residues: Translation initiation factor IF-3 (171 aa).

This sequence belongs to the IF-3 family. In terms of assembly, monomer.

Its subcellular location is the cytoplasm. In terms of biological role, IF-3 binds to the 30S ribosomal subunit and shifts the equilibrium between 70S ribosomes and their 50S and 30S subunits in favor of the free subunits, thus enhancing the availability of 30S subunits on which protein synthesis initiation begins. This Listeria innocua serovar 6a (strain ATCC BAA-680 / CLIP 11262) protein is Translation initiation factor IF-3.